The following is a 1125-amino-acid chain: Tip elongation aberrant protein 3 (1125 aa).

Kelch repeat units lie at residues phenylalanine 73–aspartate 123, threonine 124–serine 179, leucine 181–methionine 226, lysine 259–aspartate 308, and valine 310–asparagine 360. A phosphoserine mark is found at serine 430, serine 437, serine 460, serine 523, serine 980, serine 982, serine 983, serine 984, serine 1078, and serine 1080. Residues proline 507 to serine 530 form a disordered region. The segment covering isoleucine 515–serine 530 has biased composition (low complexity).

It localises to the cell tip. In terms of biological role, acts as a cell end marker required for efficient new end take-off (NETO), whereby growth is activated at the cell end to generate bipolarity in extending cells. Also required for proper placement of the septum. In Schizosaccharomyces pombe (strain 972 / ATCC 24843) (Fission yeast), this protein is Tip elongation aberrant protein 3 (tea3).